Consider the following 378-residue polypeptide: Probable 3-hydroxyisobutyryl-CoA hydrolase 2 (378 aa).

The substrate site is built by G115, E138, and D146. Positions 376–378 (AKL) match the Microbody targeting signal motif.

It belongs to the enoyl-CoA hydratase/isomerase family.

It is found in the peroxisome. The catalysed reaction is 3-hydroxy-2-methylpropanoyl-CoA + H2O = 3-hydroxy-2-methylpropanoate + CoA + H(+). It functions in the pathway amino-acid degradation; L-valine degradation. In terms of biological role, involved in valine catabolism. The sequence is that of Probable 3-hydroxyisobutyryl-CoA hydrolase 2 from Arabidopsis thaliana (Mouse-ear cress).